Here is a 213-residue protein sequence, read N- to C-terminus: uncharacterized protein (213 aa).

This is an uncharacterized protein from Acanthamoeba polyphaga (Amoeba).